We begin with the raw amino-acid sequence, 118 residues long: UPF0102 protein Cphy_2398 (118 aa).

Belongs to the UPF0102 family.

The sequence is that of UPF0102 protein Cphy_2398 from Lachnoclostridium phytofermentans (strain ATCC 700394 / DSM 18823 / ISDg) (Clostridium phytofermentans).